The primary structure comprises 264 residues: Hydroxyethylthiazole kinase (264 aa).

Substrate is bound at residue methionine 40. The ATP site is built by lysine 116 and threonine 161. A substrate-binding site is contributed by glycine 188.

Belongs to the Thz kinase family. It depends on Mg(2+) as a cofactor.

It carries out the reaction 5-(2-hydroxyethyl)-4-methylthiazole + ATP = 4-methyl-5-(2-phosphooxyethyl)-thiazole + ADP + H(+). The protein operates within cofactor biosynthesis; thiamine diphosphate biosynthesis; 4-methyl-5-(2-phosphoethyl)-thiazole from 5-(2-hydroxyethyl)-4-methylthiazole: step 1/1. Functionally, catalyzes the phosphorylation of the hydroxyl group of 4-methyl-5-beta-hydroxyethylthiazole (THZ). The sequence is that of Hydroxyethylthiazole kinase from Staphylococcus carnosus (strain TM300).